A 66-amino-acid polypeptide reads, in one-letter code: Moricin-2 (66 aa).

The signal sequence occupies residues 1 to 24; the sequence is MNILKLFFVFIVAMSLVSCSTAAP.

In terms of tissue distribution, expressed in fat body and to a lesser extent in hemocyte and Malpighian tubules.

Its subcellular location is the secreted. In terms of biological role, has antibacterial activity against Gram-positive and Gram-negative bacteria. Probably acts by disturbing membrane functions with its amphipathic structure. In Bombyx mori (Silk moth), this protein is Moricin-2 (MOR2).